The chain runs to 162 residues: Crossover junction endodeoxyribonuclease RuvC (162 aa).

Active-site residues include Asp-8, Glu-69, and His-141. The Mg(2+) site is built by Asp-8, Glu-69, and His-141.

Belongs to the RuvC family. Homodimer which binds Holliday junction (HJ) DNA. The HJ becomes 2-fold symmetrical on binding to RuvC with unstacked arms; it has a different conformation from HJ DNA in complex with RuvA. In the full resolvosome a probable DNA-RuvA(4)-RuvB(12)-RuvC(2) complex forms which resolves the HJ. Mg(2+) serves as cofactor.

The protein localises to the cytoplasm. It catalyses the reaction Endonucleolytic cleavage at a junction such as a reciprocal single-stranded crossover between two homologous DNA duplexes (Holliday junction).. Functionally, the RuvA-RuvB-RuvC complex processes Holliday junction (HJ) DNA during genetic recombination and DNA repair. Endonuclease that resolves HJ intermediates. Cleaves cruciform DNA by making single-stranded nicks across the HJ at symmetrical positions within the homologous arms, yielding a 5'-phosphate and a 3'-hydroxyl group; requires a central core of homology in the junction. The consensus cleavage sequence is 5'-(A/T)TT(C/G)-3'. Cleavage occurs on the 3'-side of the TT dinucleotide at the point of strand exchange. HJ branch migration catalyzed by RuvA-RuvB allows RuvC to scan DNA until it finds its consensus sequence, where it cleaves and resolves the cruciform DNA. This is Crossover junction endodeoxyribonuclease RuvC from Wolbachia sp. subsp. Brugia malayi (strain TRS).